Consider the following 187-residue polypeptide: uncharacterized protein (187 aa).

The N-terminal stretch at 1–25 (MSKFVKTAIAAAMVMGAFTSTATIA) is a signal peptide.

This sequence belongs to the fimbrial protein family.

Part of the yfcOPQRSUV fimbrial operon. Could contribute to adhesion to various surfaces in specific environmental niches. Increases adhesion to eukaryotic T24 bladder epithelial cells in the absence of fim genes. This is an uncharacterized protein from Escherichia coli (strain K12).